The chain runs to 276 residues: Aliphatic sulfonates import ATP-binding protein SsuB 1 (276 aa).

Residues 1–21 (MSTGNVTTLRRPEAPPSLPAG) form a disordered region. An ABC transporter domain is found at 39–259 (FSFRNVTKSF…RHGTPEFARL (221 aa)). 71-78 (GKSGCGKS) provides a ligand contact to ATP.

Belongs to the ABC transporter superfamily. Aliphatic sulfonates importer (TC 3.A.1.17.2) family. As to quaternary structure, the complex is composed of two ATP-binding proteins (SsuB), two transmembrane proteins (SsuC) and a solute-binding protein (SsuA).

The protein resides in the cell inner membrane. The catalysed reaction is ATP + H2O + aliphatic sulfonate-[sulfonate-binding protein]Side 1 = ADP + phosphate + aliphatic sulfonateSide 2 + [sulfonate-binding protein]Side 1.. In terms of biological role, part of the ABC transporter complex SsuABC involved in aliphatic sulfonates import. Responsible for energy coupling to the transport system. This is Aliphatic sulfonates import ATP-binding protein SsuB 1 from Agrobacterium fabrum (strain C58 / ATCC 33970) (Agrobacterium tumefaciens (strain C58)).